The following is a 488-amino-acid chain: Secreted triacylglycerol lipase LIP1 (488 aa).

The signal sequence occupies residues 1 to 26; it reads MPSMLSLFYLAQSLFLLLLFPLYGHA. Cysteines 119 and 288 form a disulfide. N183 carries N-linked (GlcNAc...) asparagine glycosylation. Catalysis depends on S201, which acts as the Nucleophile. The N-linked (GlcNAc...) asparagine glycan is linked to N316. Catalysis depends on residues D348 and H382. A disordered region spans residues 461 to 488; it reads SKSGSSLKSHSHSQTHKHRKDVSTISNA. Residues 469 to 480 are compositionally biased toward basic residues; it reads SHSHSQTHKHRK.

It belongs to the AB hydrolase superfamily. Lipase family. Class Lip subfamily.

The protein resides in the secreted. The catalysed reaction is a triacylglycerol + H2O = a diacylglycerol + a fatty acid + H(+). The enzyme catalyses a monoacylglycerol + H2O = glycerol + a fatty acid + H(+). It carries out the reaction a diacylglycerol + H2O = a monoacylglycerol + a fatty acid + H(+). Its activity is regulated as follows. Inhibited by different metal ions including Fe(2+), Fe(3+), Cu(2+), and Zn(2+). The monovalent ions Na(+) and K(+) exhibit less dramatic inhibition. Its function is as follows. Secreted lipase that releases free fatty acids from monoacylglycerol and triacylglycerol but has no phospholipase or lysophospholipase activities. Has minor esterase activity. Due to an absence of fatty acid synthase genes in Malassezia species, secretory lipases are essential for the yeast to generate free fatty acids from degradation of sebum and assimilate them as lipid sources for growth. Plays important roles not only in lipid metabolism but also in the immune response of host cells and pathogenesis. Hydrolyzes lipids, such as Tween 20, 40 and 80, with Tween 80 being the best substrate. This is Secreted triacylglycerol lipase LIP1 from Malassezia furfur (Pityriasis versicolor infection agent).